The following is a 394-amino-acid chain: MALLDLAQEGMALFGFVLFVVLWLMHFMSIIYTRLHLNKKATDKQPYSKLPGVSLLKPLKGVDPNLINNLETFFELDYPKYEVLLCVQDHDDPAIDVCKKLLGKYPNVDARLFIGGKKVGINPKINNLMPAYEVAKYDLIWICDSGIRVIPDTLTDMVNQMTEKVGLVHGLPYVADRQGFAATLEQVYFGTSHPRSYISANVTGFKCVTGMSCLMRKDVLDQAGGLIAFAQYIAEDYFMAKAIADRGWRFSMSTQVAMQNSGSYSISQFQSRMIRWTKLRINMLPATIICEPISECFVASLIIGWAAHHVFRWDIMVFFMCHCLAWFIFDYIQLRGVQGGTLCFSKLDYAVAWFIRESMTIYIFLSALWDPTISWRTGRYRLRCGGTAEEILDV.

The Lumenal segment spans residues 1–10 (MALLDLAQEG). A helical membrane pass occupies residues 11 to 32 (MALFGFVLFVVLWLMHFMSIIY). Over 33 to 195 (TRLHLNKKAT…QVYFGTSHPR (163 aa)) the chain is Cytoplasmic. A short sequence motif (D1) is located at residue D92. K117 bears the N6-acetyllysine mark. A short sequence motif (D2) is located at residue D144. A helical membrane pass occupies residues 196 to 215 (SYISANVTGFKCVTGMSCLM). Topologically, residues 216–287 (RKDVLDQAGG…KLRINMLPAT (72 aa)) are lumenal. Residue D236 is a short sequence motif, D3. The Proton acceptor role is filled by D236. The (Q/R)XXRW signature appears at 272-276 (RMIRW). A helical transmembrane segment spans residues 288 to 304 (IICEPISECFVASLIIG). Topologically, residues 305-309 (WAAHH) are cytoplasmic. Residues 310 to 328 (VFRWDIMVFFMCHCLAWFI) form a helical membrane-spanning segment. Residues 329–348 (FDYIQLRGVQGGTLCFSKLD) are Lumenal-facing. The helical transmembrane segment at 349-369 (YAVAWFIRESMTIYIFLSALW) threads the bilayer. At 370-394 (DPTISWRTGRYRLRCGGTAEEILDV) the chain is on the cytoplasmic side.

This sequence belongs to the glycosyltransferase 2 family. In terms of assembly, interacts with RTN1; regulates the ceramide glucosyltransferase activity of UGCG.

It localises to the golgi apparatus membrane. The enzyme catalyses an N-acylsphing-4-enine + UDP-alpha-D-glucose = a beta-D-glucosyl-(1&lt;-&gt;1')-N-acylsphing-4-enine + UDP + H(+). It catalyses the reaction UDP-alpha-D-xylose + an N-acylsphing-4-enine = a beta-D-xylosyl-(1&lt;-&gt;1')-N-acylsphing-4-enine + UDP + H(+). The catalysed reaction is N-(9Z-octadecenoyl)-sphing-4-enine + UDP-alpha-D-xylose = beta-D-xylosyl-(1&lt;-&gt;1')-N-(9Z-octadecenoyl)-sphing-4-enine + UDP + H(+). Its pathway is lipid metabolism; sphingolipid metabolism. In terms of biological role, participates in the initial step of the glucosylceramide-based glycosphingolipid/GSL synthetic pathway at the cytosolic surface of the Golgi. Catalyzes the transfer of glucose from UDP-glucose to ceramide to produce glucosylceramide/GlcCer (such as beta-D-glucosyl-(1&lt;-&gt;1')-N-acylsphing-4-enine). Glucosylceramide is the core component of glycosphingolipids/GSLs, amphipathic molecules consisting of a ceramide lipid moiety embedded in the outer leaflet of the membrane, linked to one of hundreds of different externally oriented oligosaccharide structures. Glycosphingolipids are essential components of membrane microdomains that mediate membrane trafficking and signal transduction. They are implicated in many fundamental cellular processes, including growth, differentiation, migration, morphogenesis, cell-to-cell and cell-to-matrix interactions. They are required for instance in the proper development and functioning of the nervous system. As an example of their role in signal transduction, they regulate the leptin receptor/LEPR in the leptin-mediated signaling pathway. They also play an important role in the establishment of the skin barrier regulating keratinocyte differentiation and the proper assembly of the cornified envelope. The biosynthesis of GSLs is also required for the proper intestinal endocytic uptake of nutritional lipids. Catalyzes the synthesis of xylosylceramide/XylCer (such as beta-D-xylosyl-(1&lt;-&gt;1')-N-acylsphing-4-enine) using UDP-Xyl as xylose donor. The chain is Ceramide glucosyltransferase from Mus musculus (Mouse).